A 363-amino-acid polypeptide reads, in one-letter code: Ribosomal RNA large subunit methyltransferase M (363 aa).

Residues Ser194, 227–230, Asp246, Asp266, and Asp284 each bind S-adenosyl-L-methionine; that span reads CPGG. Lys313 functions as the Proton acceptor in the catalytic mechanism.

Belongs to the class I-like SAM-binding methyltransferase superfamily. RNA methyltransferase RlmE family. RlmM subfamily. In terms of assembly, monomer.

The protein localises to the cytoplasm. It carries out the reaction cytidine(2498) in 23S rRNA + S-adenosyl-L-methionine = 2'-O-methylcytidine(2498) in 23S rRNA + S-adenosyl-L-homocysteine + H(+). Catalyzes the 2'-O-methylation at nucleotide C2498 in 23S rRNA. The chain is Ribosomal RNA large subunit methyltransferase M from Haemophilus influenzae (strain ATCC 51907 / DSM 11121 / KW20 / Rd).